Here is a 476-residue protein sequence, read N- to C-terminus: Bifunctional protein HldE (476 aa).

The tract at residues 1-318 (MKPILPDYNN…AEAIHGSRDT (318 aa)) is ribokinase. 195–198 (NMSE) contributes to the ATP binding site. Residue Asp-264 is part of the active site. The interval 344-476 (MTNGCFDILH…IIDAIKGGRG (133 aa)) is cytidylyltransferase.

This sequence in the N-terminal section; belongs to the carbohydrate kinase PfkB family. The protein in the C-terminal section; belongs to the cytidylyltransferase family. Homodimer.

The enzyme catalyses D-glycero-beta-D-manno-heptose 7-phosphate + ATP = D-glycero-beta-D-manno-heptose 1,7-bisphosphate + ADP + H(+). It carries out the reaction D-glycero-beta-D-manno-heptose 1-phosphate + ATP + H(+) = ADP-D-glycero-beta-D-manno-heptose + diphosphate. It participates in nucleotide-sugar biosynthesis; ADP-L-glycero-beta-D-manno-heptose biosynthesis; ADP-L-glycero-beta-D-manno-heptose from D-glycero-beta-D-manno-heptose 7-phosphate: step 1/4. Its pathway is nucleotide-sugar biosynthesis; ADP-L-glycero-beta-D-manno-heptose biosynthesis; ADP-L-glycero-beta-D-manno-heptose from D-glycero-beta-D-manno-heptose 7-phosphate: step 3/4. It functions in the pathway bacterial outer membrane biogenesis; LPS core biosynthesis. Catalyzes the phosphorylation of D-glycero-D-manno-heptose 7-phosphate at the C-1 position to selectively form D-glycero-beta-D-manno-heptose-1,7-bisphosphate. Functionally, catalyzes the ADP transfer from ATP to D-glycero-beta-D-manno-heptose 1-phosphate, yielding ADP-D-glycero-beta-D-manno-heptose. The chain is Bifunctional protein HldE from Vibrio vulnificus (strain CMCP6).